Reading from the N-terminus, the 458-residue chain is Phosphoglucosamine mutase (458 aa).

Residue S108 is the Phosphoserine intermediate of the active site. Mg(2+)-binding residues include S108, D247, D249, and D251. Position 108 is a phosphoserine (S108).

The protein belongs to the phosphohexose mutase family. The cofactor is Mg(2+). Activated by phosphorylation.

The enzyme catalyses alpha-D-glucosamine 1-phosphate = D-glucosamine 6-phosphate. In terms of biological role, catalyzes the conversion of glucosamine-6-phosphate to glucosamine-1-phosphate. This chain is Phosphoglucosamine mutase, found in Thiobacillus denitrificans (strain ATCC 25259 / T1).